Reading from the N-terminus, the 324-residue chain is Protein GET4 (324 aa).

The protein belongs to the GET4 family. In terms of assembly, interacts with GET3A.

It localises to the cytoplasm. Its subcellular location is the cytosol. Functionally, involved in the regulation of root hair growth. This Arabidopsis thaliana (Mouse-ear cress) protein is Protein GET4.